A 316-amino-acid polypeptide reads, in one-letter code: MTASFQHISVLLNESIEGLAIKPDGIYIDGTFGRGGHSRTILAQLGPEGRLYSIDRDPQAIAEAQKIDDPRFTIVHGPFSGIAEYAQRYDLVGKVDGVLFDLGVSSPQLDDAERGFSFMKDGPLDMRMDPTSGMPVSAWLAQADLDDITWVIREFGEDKHARRIAKAIVEYRENELNEPLTRTSQLAKLISDAAPKSFKEKKHPATRAFQAFRIYINSELEEIDTALRGASDILAPQGRLSVISFHSLEDRMVKRFMRKESQGPQVPHGIPLTQDQIRALGSAKMKTVGKALKPSDQEVELNPRSRSSVLRVAEKL.

S-adenosyl-L-methionine contacts are provided by residues 35-37 (GGH), aspartate 55, phenylalanine 79, aspartate 101, and glutamine 108. The disordered stretch occupies residues 291-316 (ALKPSDQEVELNPRSRSSVLRVAEKL).

It belongs to the methyltransferase superfamily. RsmH family.

It is found in the cytoplasm. The catalysed reaction is cytidine(1402) in 16S rRNA + S-adenosyl-L-methionine = N(4)-methylcytidine(1402) in 16S rRNA + S-adenosyl-L-homocysteine + H(+). Specifically methylates the N4 position of cytidine in position 1402 (C1402) of 16S rRNA. The sequence is that of Ribosomal RNA small subunit methyltransferase H from Vibrio cholerae serotype O1 (strain ATCC 39315 / El Tor Inaba N16961).